Reading from the N-terminus, the 359-residue chain is MATSSMKSIPMAIPSFSMCHKLELLKEGKTRDVPKAEEDEGLSCEFQEMLDSLPKERGWRTRYLYLFQGFWCQAKEIQAIMSFQKHFQSLENDVVLATIPKSGTTWLKALTFTILNRHRFDPVASSTNHPLFTSNPHDLVPFFEYKLYANGDVPDLSGLASPRTFATHLPFGSLKETIEKPGVKVVYLCRNPFDTFISSWHYTNNIKSESVSPVLLDQAFDLYCRGVIGFGPFWEHMLGYWRESLKRPEKVFFLRYEDLKDDIETNLKRLATFLELPFTEEEERKGVVKAIAELCSFENLKKLEVNKSNKSIKNFENRFLFRKGEVSDWVNYLSPSQVERLSALVDDKLGGSGLTFRLS.

101 to 106 (KSGTTW) serves as a coordination point for 3'-phosphoadenylyl sulfate. His-168 serves as the catalytic Proton acceptor. 3'-phosphoadenylyl sulfate contacts are provided by residues Arg-190, Ser-198, Tyr-256, and 322-324 (RKG).

Belongs to the sulfotransferase 1 family. As to expression, expressed in leaves.

The protein localises to the cytoplasm. The catalysed reaction is a 12-hydroxyjasmonate + 3'-phosphoadenylyl sulfate = a 12-sulfojasmonate + adenosine 3',5'-bisphosphate + H(+). Functionally, sulfotransferase that utilizes 3'-phospho-5'-adenylyl sulfate (PAPS) as sulfonate donor to specifically catalyze the sulfate conjugation of hydroxyjasmonates, with a preference for 12-hydroxyjasmonate over 11-hydroxyjasmonate. No activity with 12-hydroxyjasmonic acid methyl ester, cucurbic acid, 7-iso-cucurbic acid, 6-epi-cucurbic acid, 6-epi-7-iso-cucurbic acid and their methyl esters, prostaglandin E2, arachidonyl alcohol and 11-eicosenol. The sequence is that of Cytosolic sulfotransferase 15 (SOT15) from Arabidopsis thaliana (Mouse-ear cress).